Consider the following 136-residue polypeptide: Small nuclear ribonucleoprotein Sm D3 (136 aa).

The Sm domain maps to Val-6 to Leu-78. A disordered region spans residues Gly-98–Gly-136.

The protein belongs to the snRNP core protein family.

Its subcellular location is the nucleus. It localises to the cytoplasm. The protein resides in the cytosol. In terms of biological role, plays a role in pre-mRNA splicing as a core component of the spliceosomal U1, U2, U4 and U5 small nuclear ribonucleoproteins (snRNPs), the building blocks of the spliceosome. This is Small nuclear ribonucleoprotein Sm D3 (snr-1) from Caenorhabditis elegans.